Here is a 483-residue protein sequence, read N- to C-terminus: MORN repeat-containing protein 1 (483 aa).

A Phosphoserine modification is found at Ser-18. 7 MORN repeats span residues 39 to 61, 62 to 84, 86 to 108, 109 to 131, 132 to 154, 155 to 177, and 178 to 200; these read YEGE…DGSY, YEGE…WSGN, YSGQ…AGGH, YEGE…DGQV, YQGS…NGDK, YEGD…DGST, and YKGQ…SGVT. Residues 392-427 are disordered; it reads EKAGNRPKGDRSPPEVLSTAQEPLRGTNRSDGTTAE. Over residues 394–404 the composition is skewed to basic and acidic residues; the sequence is AGNRPKGDRSP. Position 403 is a phosphoserine (Ser-403). Over residues 418–427 the composition is skewed to polar residues; the sequence is TNRSDGTTAE.

This is MORN repeat-containing protein 1 (Morn1) from Rattus norvegicus (Rat).